We begin with the raw amino-acid sequence, 209 residues long: Redox-sensing transcriptional repressor Rex (209 aa).

The H-T-H motif DNA-binding region spans 16 to 55 (LYYRFIQNLSLSGKQRVSSAELSEAVKVDSATIRRDFSYF). Residue 90–95 (GVGNLG) participates in NAD(+) binding.

It belongs to the transcriptional regulatory Rex family. In terms of assembly, homodimer.

Its subcellular location is the cytoplasm. Functionally, modulates transcription in response to changes in cellular NADH/NAD(+) redox state. This Bacillus thuringiensis (strain Al Hakam) protein is Redox-sensing transcriptional repressor Rex.